The chain runs to 668 residues: Trehalase (668 aa).

Residues 1-23 form a disordered region; it reads MVLQQTEPTDGADRKASDGPLTV.

Belongs to the glycosyl hydrolase 15 family. Homomultimer of 20 or more subunits. The cofactor is Mg(2+). Phosphate is required as a cofactor.

It carries out the reaction alpha,alpha-trehalose + H2O = alpha-D-glucose + beta-D-glucose. Its pathway is glycan degradation; trehalose degradation; D-glucose from alpha,alpha-trehalose: step 1/1. Inhibited by pyrophosphate and polyphosphates. Also competitively inhibited by validoxylamine and castanospermine, but not by trehazolin. Catalyzes the hydrolysis of alpha,alpha-trehalose into two molecules of D-glucose. Does not hydrolyze maltose, isomaltose, sucrose, cellobiose, p-nitrophenyl-alpha-D-glucopyranoside, and methyl-alpha-D-glucopyranoside. Is also inactive on alpha,beta-trehalose, beta,beta-trehalose, alpha,alpha-trehalose-6,6'-dibehenate, trehalulose, nigerose, and trehalose dimycolate. This chain is Trehalase, found in Mycolicibacterium smegmatis (strain ATCC 700084 / mc(2)155) (Mycobacterium smegmatis).